A 278-amino-acid chain; its full sequence is 3-methyl-2-oxobutanoate hydroxymethyltransferase (278 aa).

Positions 44 and 83 each coordinate Mg(2+). Residues 44-45 (DS), aspartate 83, and lysine 112 contribute to the 3-methyl-2-oxobutanoate site. Mg(2+) is bound at residue glutamate 114. The active-site Proton acceptor is glutamate 181.

Belongs to the PanB family. Homodecamer; pentamer of dimers. It depends on Mg(2+) as a cofactor.

It is found in the cytoplasm. The enzyme catalyses 3-methyl-2-oxobutanoate + (6R)-5,10-methylene-5,6,7,8-tetrahydrofolate + H2O = 2-dehydropantoate + (6S)-5,6,7,8-tetrahydrofolate. Its pathway is cofactor biosynthesis; (R)-pantothenate biosynthesis; (R)-pantoate from 3-methyl-2-oxobutanoate: step 1/2. Its function is as follows. Catalyzes the reversible reaction in which hydroxymethyl group from 5,10-methylenetetrahydrofolate is transferred onto alpha-ketoisovalerate to form ketopantoate. This chain is 3-methyl-2-oxobutanoate hydroxymethyltransferase, found in Roseiflexus sp. (strain RS-1).